Reading from the N-terminus, the 526-residue chain is Fluoride export protein 1 (526 aa).

Disordered stretches follow at residues 1–73 (MMTA…RRAS) and 90–149 (ASNI…KQAG). Residues 1–159 (MMTAPSDTEG…VVAKRQKVSR (159 aa)) are Cytoplasmic-facing. Basic and acidic residues-rich tracts occupy residues 21-36 (SPDR…DHNH) and 103-123 (PITR…YLRE). A helical membrane pass occupies residues 160–180 (LATELYTISYLIFFSLLGTLA). Topologically, residues 181–194 (RLGLQALTSAYPQS) are extracellular. The helical transmembrane segment at 195-215 (PIIFPSIWPNFAGCVVMGFLA) threads the bilayer. Over 216–260 (EDRMLFRPDWGQQQPNPKKDDDDDEEAKDIDPAAAKKAHMALKKT) the chain is Cytoplasmic. Positions 223–242 (PDWGQQQPNPKKDDDDDEEA) are disordered. The helical transmembrane segment at 261-281 (IPLYVGLATGFCGSFTSFSSF) threads the bilayer. Residues 282 to 310 (IRDIYLALSNDLAAHGSSAAPVSRNGGYS) lie on the Extracellular side of the membrane. The helical transmembrane segment at 311–331 (FMALLAVTITTISLSLSGLFA) threads the bilayer. Topologically, residues 332-361 (GAHLAIAIATLFTRFDLGLPYTFVSRILDR) are cytoplasmic. The helical transmembrane segment at 362–382 (LIVLLGFGCWLGAVLLSIWPP) threads the bilayer. The Extracellular segment spans residues 383-398 (DRHSAQPEKERWRGTA). A helical membrane pass occupies residues 399-419 (TFALVFAPLGCLTRFYASAHL). At 420–424 (NGRLP) the chain is on the cytoplasmic side. The chain crosses the membrane as a helical span at residues 425-445 (SFPLGTFVVNMLGTAVLGMAW). Over 446-452 (DLNHVPS) the chain is Extracellular. The helical transmembrane segment at 453–473 (LGGVVGCQVLQGVADGFCGCL) threads the bilayer. Residues 474–492 (TTVSTWVSELAALRRRHAY) are Cytoplasmic-facing. The chain crosses the membrane as a helical span at residues 493–513 (VYGGASVGGGLALMVVVMGSL). Topologically, residues 514–526 (RWTEGFGEVKCIS) are extracellular.

It belongs to the fluoride channel Fluc/FEX (TC 1.A.43) family.

The protein resides in the cell membrane. It carries out the reaction fluoride(in) = fluoride(out). Fluoride channel required for the rapid expulsion of cytoplasmic fluoride. In Neurospora crassa (strain ATCC 24698 / 74-OR23-1A / CBS 708.71 / DSM 1257 / FGSC 987), this protein is Fluoride export protein 1.